Consider the following 118-residue polypeptide: NADH-quinone oxidoreductase subunit A (118 aa).

The next 3 membrane-spanning stretches (helical) occupy residues 5 to 25, 62 to 82, and 87 to 107; these read YAFIGIFALAAITFPLLPLVL, LYALAFVIFDIETVFLYPWAV, and LGLFALFEMVVFLAILTIGLV.

Belongs to the complex I subunit 3 family. In terms of assembly, NDH-1 is composed of 14 different subunits. Subunits NuoA, H, J, K, L, M, N constitute the membrane sector of the complex.

The protein localises to the cell membrane. The catalysed reaction is a quinone + NADH + 5 H(+)(in) = a quinol + NAD(+) + 4 H(+)(out). Its function is as follows. NDH-1 shuttles electrons from NADH, via FMN and iron-sulfur (Fe-S) centers, to quinones in the respiratory chain. The immediate electron acceptor for the enzyme in this species is believed to be ubiquinone. Couples the redox reaction to proton translocation (for every two electrons transferred, four hydrogen ions are translocated across the cytoplasmic membrane), and thus conserves the redox energy in a proton gradient. The polypeptide is NADH-quinone oxidoreductase subunit A (Herpetosiphon aurantiacus (strain ATCC 23779 / DSM 785 / 114-95)).